The following is a 130-amino-acid chain: Small ribosomal subunit protein uS17m (130 aa).

This sequence belongs to the universal ribosomal protein uS17 family. In terms of assembly, component of the mitochondrial ribosome small subunit (28S) which comprises a 12S rRNA and about 30 distinct proteins.

The protein resides in the mitochondrion. The polypeptide is Small ribosomal subunit protein uS17m (MRPS17) (Bos taurus (Bovine)).